Consider the following 775-residue polypeptide: Chondroitin sulfate synthase 2 (775 aa).

At 1–15 the chain is on the cytoplasmic side; the sequence is MRASLLLSVLRPAGP. A helical; Signal-anchor for type II membrane protein transmembrane segment spans residues 16 to 34; that stretch reads VAVGISLGFTLSLLSVTWV. Residues 35-775 are Lumenal-facing; it reads EEPCGPGPPQ…LFEQEQGNST (741 aa). Residues 37–100 form a disordered region; sequence PCGPGPPQPG…YHPAQPGQAA (64 aa). Residues 54–66 are compositionally biased toward polar residues; sequence GNTNAARRPNSVQ. N138 and N361 each carry an N-linked (GlcNAc...) asparagine glycan. D617 lines the a divalent metal cation pocket.

Belongs to the chondroitin N-acetylgalactosaminyltransferase family. As to quaternary structure, interacts with PRKN. Mn(2+) is required as a cofactor. The cofactor is Co(2+). Ubiquitous. Highly expressed in pancreas, ovary, brain, heart, skeletal muscle, colon, kidney, liver, stomach, spleen and placenta. As to expression, expressed in brain, spleen, ovary, testis, lung and peripheral mononuclear cells. In terms of tissue distribution, also ubiquitous.

The protein resides in the golgi apparatus. The protein localises to the golgi stack membrane. It localises to the cytoplasm. It is found in the cytosol. Its subcellular location is the mitochondrion. The protein resides in the mitochondrion matrix. The enzyme catalyses 3-O-(beta-D-GlcA-(1-&gt;3)-beta-D-GalNAc-(1-&gt;4)-beta-D-GlcA-(1-&gt;3)-beta-D-Gal-(1-&gt;3)-beta-D-Gal-(1-&gt;4)-beta-D-Xyl)-L-seryl-[protein] + UDP-N-acetyl-alpha-D-galactosamine = 3-O-(beta-D-GalNAc-(1-&gt;4)-beta-D-GlcA-(1-&gt;3)-beta-D-GalNAc-(1-&gt;4)-beta-D-GlcA-(1-&gt;3)-beta-D-Gal-(1-&gt;3)-beta-D-Gal-(1-&gt;4)-beta-D-Xyl)-L-seryl-[protein] + UDP + H(+). The catalysed reaction is 3-O-{beta-D-GlcA-(1-&gt;3)-[beta-D-GalNAc-(1-&gt;4)-beta-D-GlcA-(1-&gt;3)](n)-beta-D-GalNAc-(1-&gt;4)-beta-D-GlcA-(1-&gt;3)-beta-D-Gal-(1-&gt;3)-beta-D-Gal-(1-&gt;4)-beta-D-Xyl}-L-seryl-[protein] + UDP-N-acetyl-alpha-D-galactosamine = 3-O-{[beta-D-GalNAc-(1-&gt;4)-beta-D-GlcA-(1-&gt;3)](n+1)-beta-D-GalNAc-(1-&gt;4)-beta-D-GlcA-(1-&gt;3)-beta-D-Gal-(1-&gt;3)-beta-D-Gal-(1-&gt;4)-beta-D-Xyl}-L-seryl-[protein] + UDP + H(+). It carries out the reaction 3-O-(beta-D-GalNAc-(1-&gt;4)-beta-D-GlcA-(1-&gt;3)-beta-D-Gal-(1-&gt;3)-beta-D-Gal-(1-&gt;4)-beta-D-Xyl)-L-seryl-[protein] + UDP-alpha-D-glucuronate = 3-O-(beta-D-GlcA-(1-&gt;3)-beta-D-GalNAc-(1-&gt;4)-beta-D-GlcA-(1-&gt;3)-beta-D-Gal-(1-&gt;3)-beta-D-Gal-(1-&gt;4)-beta-D-Xyl)-L-seryl-[protein] + UDP + H(+). It catalyses the reaction 3-O-{[beta-D-GalNAc-(1-&gt;4)-beta-D-GlcA-(1-&gt;3)](n)-beta-D-GalNAc-(1-&gt;4)-beta-D-GlcA-(1-&gt;3)-beta-D-Gal-(1-&gt;3)-beta-D-Gal-(1-&gt;4)-beta-D-Xyl}-L-seryl-[protein] + UDP-alpha-D-glucuronate = 3-O-{beta-D-GlcA-(1-&gt;3)-[beta-D-GalNAc-(1-&gt;4)-beta-D-GlcA-(1-&gt;3)](n)-beta-D-GalNAc-(1-&gt;4)-beta-D-GlcA-(1-&gt;3)-beta-D-Gal-(1-&gt;3)-beta-D-Gal-(1-&gt;4)-beta-D-Xyl}-L-seryl-[protein] + UDP + H(+). Its function is as follows. Has both beta-1,3-glucuronic acid and beta-1,4-N-acetylgalactosamine transferase activity. Transfers glucuronic acid (GlcUA) from UDP-GlcUA and N-acetylgalactosamine (GalNAc) from UDP-GalNAc to the non-reducing end of the elongating chondroitin polymer. Seems to act as a specific activating factor for CHSY1 in chondroitin polymerization. In terms of biological role, may facilitate PRKN transport into the mitochondria. In collaboration with PRKN, may enhance cell viability and protect cells from oxidative stress. This Homo sapiens (Human) protein is Chondroitin sulfate synthase 2.